Consider the following 631-residue polypeptide: Glutamyl-tRNA(Gln) amidotransferase subunit E (631 aa).

This sequence belongs to the GatB/GatE family. GatE subfamily. Heterodimer of GatD and GatE.

It catalyses the reaction L-glutamyl-tRNA(Gln) + L-glutamine + ATP + H2O = L-glutaminyl-tRNA(Gln) + L-glutamate + ADP + phosphate + H(+). In terms of biological role, allows the formation of correctly charged Gln-tRNA(Gln) through the transamidation of misacylated Glu-tRNA(Gln) in organisms which lack glutaminyl-tRNA synthetase. The reaction takes place in the presence of glutamine and ATP through an activated gamma-phospho-Glu-tRNA(Gln). The GatDE system is specific for glutamate and does not act on aspartate. In Methanococcus maripaludis (strain C6 / ATCC BAA-1332), this protein is Glutamyl-tRNA(Gln) amidotransferase subunit E.